The sequence spans 673 residues: Annexin A6 (673 aa).

Ala-2 carries the N-acetylalanine modification. Ser-13 carries the post-translational modification Phosphoserine. Annexin repeat units follow at residues 20 to 91, 92 to 163, 175 to 247, 251 to 322, 363 to 434, 435 to 506, 521 to 595, and 599 to 670; these read FDPN…GLMR, PPAY…VLLQ, DLVQ…AVVK, STPE…KLSG, FNPD…GLMM, PPAH…SLAT, EDAQ…AIVQ, and NKPL…ALCG. Position 30 is a phosphotyrosine (Tyr-30). Residues Lys-63, Lys-68, Lys-75, and Lys-81 each carry the N6-acetyllysine modification. Tyr-201 is subject to Phosphotyrosine. Residues Lys-306, Lys-370, and Lys-418 each carry the N6-acetyllysine modification. Ser-422 bears the Phosphoserine mark. At Lys-483 the chain carries N6-acetyllysine. A Phosphoserine modification is found at Ser-537. Lys-620 is modified (N6-acetyllysine).

It belongs to the annexin family. Post-translationally, phosphorylated in response to growth factor stimulation.

The protein localises to the cytoplasm. The protein resides in the melanosome. Functionally, may associate with CD21. May regulate the release of Ca(2+) from intracellular stores. The polypeptide is Annexin A6 (ANXA6) (Homo sapiens (Human)).